The sequence spans 320 residues: Ferrochelatase (320 aa).

Fe cation-binding residues include histidine 194 and glutamate 275.

This sequence belongs to the ferrochelatase family.

It localises to the cytoplasm. It carries out the reaction heme b + 2 H(+) = protoporphyrin IX + Fe(2+). It functions in the pathway porphyrin-containing compound metabolism; protoheme biosynthesis; protoheme from protoporphyrin-IX: step 1/1. Its function is as follows. Catalyzes the ferrous insertion into protoporphyrin IX. The sequence is that of Ferrochelatase from Cronobacter sakazakii (strain ATCC BAA-894) (Enterobacter sakazakii).